The sequence spans 853 residues: MSLNDNTNLSSHTPMMQQYLRLKAEHPEILLFYRMGDFYELFYDDAKRASQLLEISLTKRGSSAGEPIPMAGVPYHAVENYLAKLVHLGESVAICEQIGDPALSKGPVERKVVRIVTPGTISDEALLNERQDNLLAAIWQSTRGFGYATLDISSGRFRLAEPTDRETMAAELQRTNPAELLYPEDFAAMDLIENRRGLRRRALWEYELDTARQQLNLQFATRDLSGFGVEQAHHALRAAGCLLQYVKDTQRTSLPHIRSLTIERQQDGIIMDAATRRNLEITQNLAGGSDNTLASVLDKTVTPMGSRMLKRWLHMPLRNAQTIALRQQSIRTLQDLNDSLPPLLRQVGDLERILARLALRTARPRDLARMRHAFQQLPQLNNELADSDNAHLQTLRSQMGEFTELRELLEHAIVETPPVLVRDGGVIAPGYNQELDEWRALADGATDYLDRLEIREREKLGLDTLKVGFNGVHGYYIQVSRGQSHLVPIHYVRRQTLKNAERYIIPELKEYEDKVLTSKGKALSLEKALYEQLFDRLLPHLAALQDSAAALAELDVLTNLAERAWTLNYSCPTLSDKPGIKLTGGRHPVVEQVLKDPFIANPLSLSPQRRMLVVTGPNMGGKSTYMRQAALITLMAHIGSFVPAEQAIIGPIDRIFTRVGAADDLASGRSTFMVEMTETANILHNATEYSLVLMDEIGRGTSTYDGLSLAWACAESLANRIKAMTLFATHYFELTTLPEQIEGVANVHLDAVEHGDTIAFMHSVQEGAASKSYGLAVAALAGVPKDVIKRARQKLKELEALSGSAASTRADGSQLPLLVEETSPAVEALEALDPDSLSPRQALEWIYRLKSLV.

616–623 (GPNMGGKS) contacts ATP.

This sequence belongs to the DNA mismatch repair MutS family.

In terms of biological role, this protein is involved in the repair of mismatches in DNA. It is possible that it carries out the mismatch recognition step. This protein has a weak ATPase activity. This is DNA mismatch repair protein MutS from Erwinia tasmaniensis (strain DSM 17950 / CFBP 7177 / CIP 109463 / NCPPB 4357 / Et1/99).